Consider the following 319-residue polypeptide: Mitochondrial fission regulator 1-like (319 aa).

The tract at residues 1–35 (MASLGAGAEPESVLFGKDGTEACESPEGRRSGRRK) is disordered.

The protein belongs to the MTFR1 family.

The protein localises to the mitochondrion outer membrane. In terms of biological role, mitochondrial protein required for adaptation of miochondrial dynamics to metabolic changes. Regulates mitochondrial morphology at steady state and mediates AMPK-dependent stress-induced mitochondrial fragmentation via the control of OPA1 levels. The protein is Mitochondrial fission regulator 1-like (mtfr1l) of Xenopus tropicalis (Western clawed frog).